Here is a 284-residue protein sequence, read N- to C-terminus: MPELPEVETVRRGLELVTLKQPIVDVEVLLARSIALPKEPQAFIEHLRDRRIEQWQRRGKYLLATLDDGSRLVIHLRMSGQLLWLTTPQPPCPHTRVRWFFPTRAELRFVDQRTFGRCWWLPPDCRVAEAIPALATLAPEPLSEAFTVAFLAARLAHCRRSIKTALLDQSIVAGMGNIYADESLFLSGLHPTQSAHTLTPEQVQRLHGVICQVLREGIAAGGTTIRTFMSPAGVNGHYGGQAWVYGRKGEACRVCGTTIERLRLAGRSSHYCPQCQPLSSAIGK.

Proline 2 functions as the Schiff-base intermediate with DNA in the catalytic mechanism. Glutamate 3 serves as the catalytic Proton donor. The Proton donor; for beta-elimination activity role is filled by lysine 60. DNA-binding residues include histidine 94 and arginine 113. The FPG-type zinc finger occupies 243–277 (WVYGRKGEACRVCGTTIERLRLAGRSSHYCPQCQP). The active-site Proton donor; for delta-elimination activity is arginine 267.

Belongs to the FPG family. In terms of assembly, monomer. Requires Zn(2+) as cofactor.

The catalysed reaction is Hydrolysis of DNA containing ring-opened 7-methylguanine residues, releasing 2,6-diamino-4-hydroxy-5-(N-methyl)formamidopyrimidine.. The enzyme catalyses 2'-deoxyribonucleotide-(2'-deoxyribose 5'-phosphate)-2'-deoxyribonucleotide-DNA = a 3'-end 2'-deoxyribonucleotide-(2,3-dehydro-2,3-deoxyribose 5'-phosphate)-DNA + a 5'-end 5'-phospho-2'-deoxyribonucleoside-DNA + H(+). Involved in base excision repair of DNA damaged by oxidation or by mutagenic agents. Acts as a DNA glycosylase that recognizes and removes damaged bases. Has a preference for oxidized purines, such as 7,8-dihydro-8-oxoguanine (8-oxoG). Has AP (apurinic/apyrimidinic) lyase activity and introduces nicks in the DNA strand. Cleaves the DNA backbone by beta-delta elimination to generate a single-strand break at the site of the removed base with both 3'- and 5'-phosphates. The chain is Formamidopyrimidine-DNA glycosylase (mutM) from Synechococcus elongatus.